The primary structure comprises 463 residues: Glutamyl-tRNA reductase (463 aa).

Substrate-binding positions include T49–R52, S109, E114–Q116, and Q120. C50 (nucleophile) is an active-site residue. An NADP(+)-binding site is contributed by G196–S201.

It belongs to the glutamyl-tRNA reductase family. Homodimer.

The enzyme catalyses (S)-4-amino-5-oxopentanoate + tRNA(Glu) + NADP(+) = L-glutamyl-tRNA(Glu) + NADPH + H(+). It functions in the pathway porphyrin-containing compound metabolism; protoporphyrin-IX biosynthesis; 5-aminolevulinate from L-glutamyl-tRNA(Glu): step 1/2. Its function is as follows. Catalyzes the NADPH-dependent reduction of glutamyl-tRNA(Glu) to glutamate 1-semialdehyde (GSA). The chain is Glutamyl-tRNA reductase from Corynebacterium glutamicum (strain R).